A 441-amino-acid chain; its full sequence is Ribosomal protein uS12 methylthiotransferase RimO (441 aa).

Residues 8–118 (PKIGFVSLGC…VLQHVHHYVP (111 aa)) form the MTTase N-terminal domain. 6 residues coordinate [4Fe-4S] cluster: C17, C53, C82, C150, C154, and C157. Residues 136 to 373 (LTPRHYAYLK…MQLQQQISAE (238 aa)) form the Radical SAM core domain. Residues 376–441 (QEKVGREILV…DEYDLWGSRV (66 aa)) enclose the TRAM domain.

The protein belongs to the methylthiotransferase family. RimO subfamily. [4Fe-4S] cluster is required as a cofactor.

The protein resides in the cytoplasm. It catalyses the reaction L-aspartate(89)-[ribosomal protein uS12]-hydrogen + (sulfur carrier)-SH + AH2 + 2 S-adenosyl-L-methionine = 3-methylsulfanyl-L-aspartate(89)-[ribosomal protein uS12]-hydrogen + (sulfur carrier)-H + 5'-deoxyadenosine + L-methionine + A + S-adenosyl-L-homocysteine + 2 H(+). Catalyzes the methylthiolation of an aspartic acid residue of ribosomal protein uS12. The chain is Ribosomal protein uS12 methylthiotransferase RimO from Salmonella heidelberg (strain SL476).